The following is a 501-amino-acid chain: ATP synthase subunit alpha (501 aa).

An ATP-binding site is contributed by 169–176 (GDRQTGKT).

The protein belongs to the ATPase alpha/beta chains family. As to quaternary structure, F-type ATPases have 2 components, CF(1) - the catalytic core - and CF(0) - the membrane proton channel. CF(1) has five subunits: alpha(3), beta(3), gamma(1), delta(1), epsilon(1). CF(0) has three main subunits: a(1), b(2) and c(9-12). The alpha and beta chains form an alternating ring which encloses part of the gamma chain. CF(1) is attached to CF(0) by a central stalk formed by the gamma and epsilon chains, while a peripheral stalk is formed by the delta and b chains.

The protein localises to the cell membrane. It catalyses the reaction ATP + H2O + 4 H(+)(in) = ADP + phosphate + 5 H(+)(out). Functionally, produces ATP from ADP in the presence of a proton gradient across the membrane. The alpha chain is a regulatory subunit. The protein is ATP synthase subunit alpha of Streptococcus pneumoniae (strain Hungary19A-6).